Consider the following 590-residue polypeptide: Protein NRT1/ PTR FAMILY 8.5 (590 aa).

Residues 96–116 traverse the membrane as a helical segment; sequence ASDVMIWQGTCYITPLIGAVI. Thr126 is subject to Phosphothreonine. The next 10 membrane-spanning stretches (helical) occupy residues 130–150, 168–188, 214–234, 242–262, 365–385, 401–421, 445–465, 478–498, 524–544, and 562–582; these read FSAI…LPVL, TVQY…TGGI, FFNW…TLLV, WGLG…SFFI, FPIW…STLF, IPPA…IPIY, MGIG…VETV, IFWQ…FFIG, AVGS…TALG, and FFWL…LICV.

The protein belongs to the major facilitator superfamily. Proton-dependent oligopeptide transporter (POT/PTR) (TC 2.A.17) family. In terms of tissue distribution, expressed in shoots, roots, stems, leaves, flowers and siliques.

Its subcellular location is the membrane. The protein is Protein NRT1/ PTR FAMILY 8.5 (NPF8.5) of Arabidopsis thaliana (Mouse-ear cress).